A 182-amino-acid polypeptide reads, in one-letter code: Early upstream open reading frame (182 aa).

It belongs to the EUO family.

This Chlamydophila psittaci (strain ATCC VR-125 / 6BC) (Chlamydia psittaci) protein is Early upstream open reading frame.